Reading from the N-terminus, the 344-residue chain is Holliday junction branch migration complex subunit RuvB (344 aa).

A large ATPase domain (RuvB-L) region spans residues 1 to 181 (MERIVTPAEM…FGVLCAMEYY (181 aa)). ATP-binding positions include Leu-20, Arg-21, Gly-62, Lys-65, Thr-66, Thr-67, 128 to 130 (EDY), Arg-171, Tyr-181, and Arg-218. Thr-66 lines the Mg(2+) pocket. Residues 182 to 252 (DETQLKEIVI…EARDALELLE (71 aa)) are small ATPAse domain (RuvB-S). The head domain (RuvB-H) stretch occupies residues 255–344 (NQGFDKVDNK…SNKGQTSFFK (90 aa)). 2 residues coordinate DNA: Arg-310 and Arg-315.

The protein belongs to the RuvB family. Homohexamer. Forms an RuvA(8)-RuvB(12)-Holliday junction (HJ) complex. HJ DNA is sandwiched between 2 RuvA tetramers; dsDNA enters through RuvA and exits via RuvB. An RuvB hexamer assembles on each DNA strand where it exits the tetramer. Each RuvB hexamer is contacted by two RuvA subunits (via domain III) on 2 adjacent RuvB subunits; this complex drives branch migration. In the full resolvosome a probable DNA-RuvA(4)-RuvB(12)-RuvC(2) complex forms which resolves the HJ.

Its subcellular location is the cytoplasm. It catalyses the reaction ATP + H2O = ADP + phosphate + H(+). The RuvA-RuvB-RuvC complex processes Holliday junction (HJ) DNA during genetic recombination and DNA repair, while the RuvA-RuvB complex plays an important role in the rescue of blocked DNA replication forks via replication fork reversal (RFR). RuvA specifically binds to HJ cruciform DNA, conferring on it an open structure. The RuvB hexamer acts as an ATP-dependent pump, pulling dsDNA into and through the RuvAB complex. RuvB forms 2 homohexamers on either side of HJ DNA bound by 1 or 2 RuvA tetramers; 4 subunits per hexamer contact DNA at a time. Coordinated motions by a converter formed by DNA-disengaged RuvB subunits stimulates ATP hydrolysis and nucleotide exchange. Immobilization of the converter enables RuvB to convert the ATP-contained energy into a lever motion, pulling 2 nucleotides of DNA out of the RuvA tetramer per ATP hydrolyzed, thus driving DNA branch migration. The RuvB motors rotate together with the DNA substrate, which together with the progressing nucleotide cycle form the mechanistic basis for DNA recombination by continuous HJ branch migration. Branch migration allows RuvC to scan DNA until it finds its consensus sequence, where it cleaves and resolves cruciform DNA. The sequence is that of Holliday junction branch migration complex subunit RuvB from Clostridium botulinum (strain Eklund 17B / Type B).